Reading from the N-terminus, the 151-residue chain is Protein INO4 (151 aa).

Residues 45 to 97 (QIRINHVSSEKKRRELERAIFDELVAVVPDLQPQESRSELIIYLKSLSYLSWL) enclose the bHLH domain. The segment at 112–137 (HEAKTGSSSSSDPVQEQNGNIRDLVP) is disordered. Residues 116-131 (TGSSSSSDPVQEQNGN) show a composition bias toward polar residues.

Efficient DNA binding requires dimerization with another bHLH protein.

The protein resides in the nucleus. Its function is as follows. Transcriptional activator of phospholipid synthetic genes (such as INO1, CHO1/PSS, CHO2/PEM1, OPI3/PEM2, etc.). This Saccharomyces cerevisiae (strain ATCC 204508 / S288c) (Baker's yeast) protein is Protein INO4 (INO4).